Consider the following 439-residue polypeptide: Ornithine aminotransferase, mitochondrial (439 aa).

Residues Met1–Ala25 constitute a mitochondrion transit peptide. N6-acetyllysine occurs at positions 49 and 66. Lys102 carries the post-translational modification N6-succinyllysine. Residue Lys107 is modified to N6-acetyllysine; alternate. Lys107 bears the N6-succinyllysine; alternate mark. Lys292 carries the N6-(pyridoxal phosphate)lysine modification. N6-acetyllysine; alternate is present on Lys362. Lys362 is subject to N6-succinyllysine; alternate. N6-acetyllysine occurs at positions 386 and 392. Lys405 carries the N6-acetyllysine; alternate modification. Lys405 carries the N6-succinyllysine; alternate modification. At Lys421 the chain carries N6-acetyllysine.

The protein belongs to the class-III pyridoxal-phosphate-dependent aminotransferase family. Homohexamer. The cofactor is pyridoxal 5'-phosphate.

The protein resides in the mitochondrion matrix. The catalysed reaction is L-ornithine + 2-oxoglutarate = L-glutamate 5-semialdehyde + L-glutamate. Its pathway is amino-acid biosynthesis; L-proline biosynthesis; L-glutamate 5-semialdehyde from L-ornithine: step 1/1. Its function is as follows. Catalyzes the reversible interconversion of L-ornithine and 2-oxoglutarate to L-glutamate semialdehyde and L-glutamate. The chain is Ornithine aminotransferase, mitochondrial (Oat) from Mus musculus (Mouse).